We begin with the raw amino-acid sequence, 750 residues long: Photosystem I P700 chlorophyll a apoprotein A1 (750 aa).

The next 8 helical transmembrane spans lie at 70-93 (VFSA…FHGA), 156-179 (LYST…FHYH), 195-219 (LNHH…HVSL), 291-309 (TAHH…GHMY), 346-369 (WHAQ…HHMY), 385-411 (LSLF…IFMV), 433-455 (AIIS…LYIH), and 531-549 (FLVH…LILL). Residues cysteine 573 and cysteine 582 each contribute to the [4Fe-4S] cluster site. Helical transmembrane passes span 589–610 (HVFL…HFSW) and 664–686 (LSAY…MFLF). Histidine 675 is a binding site for chlorophyll a'. Chlorophyll a contacts are provided by methionine 683 and tyrosine 691. Tryptophan 692 serves as a coordination point for phylloquinone. A helical transmembrane segment spans residues 724-744 (AVGVAHYLLGGIATTWAFFLA).

This sequence belongs to the PsaA/PsaB family. As to quaternary structure, the PsaA/B heterodimer binds the P700 chlorophyll special pair and subsequent electron acceptors. PSI consists of a core antenna complex that captures photons, and an electron transfer chain that converts photonic excitation into a charge separation. The eukaryotic PSI reaction center is composed of at least 11 subunits. It depends on P700 is a chlorophyll a/chlorophyll a' dimer, A0 is one or more chlorophyll a, A1 is one or both phylloquinones and FX is a shared 4Fe-4S iron-sulfur center. as a cofactor.

The protein localises to the plastid. It is found in the chloroplast thylakoid membrane. It carries out the reaction reduced [plastocyanin] + hnu + oxidized [2Fe-2S]-[ferredoxin] = oxidized [plastocyanin] + reduced [2Fe-2S]-[ferredoxin]. Functionally, psaA and PsaB bind P700, the primary electron donor of photosystem I (PSI), as well as the electron acceptors A0, A1 and FX. PSI is a plastocyanin-ferredoxin oxidoreductase, converting photonic excitation into a charge separation, which transfers an electron from the donor P700 chlorophyll pair to the spectroscopically characterized acceptors A0, A1, FX, FA and FB in turn. Oxidized P700 is reduced on the lumenal side of the thylakoid membrane by plastocyanin. The protein is Photosystem I P700 chlorophyll a apoprotein A1 of Anthoceros angustus (Hornwort).